Here is a 3184-residue protein sequence, read N- to C-terminus: Cilia and flagella-associated protein 47 (3184 aa).

Residues 1729 to 1851 (SDSERILLSW…LCVYLYERLP (123 aa)) form the Calponin-homology (CH) domain. The interval 2491 to 2514 (RDEEESQEETDTEKDFSSQETPSD) is disordered. Residues 2493–2502 (EEESQEETDT) are compositionally biased toward acidic residues.

In terms of assembly, interacts with CFAP65. Highly expressed in spermatzoa (at protein level).

The protein resides in the cytoplasm. It is found in the cytoskeleton. It localises to the flagellum basal body. Its function is as follows. Plays a role in flagellar formation and sperm motility. The sequence is that of Cilia and flagella-associated protein 47 from Mus musculus (Mouse).